We begin with the raw amino-acid sequence, 301 residues long: ATP synthase gamma chain (301 aa).

This sequence belongs to the ATPase gamma chain family. As to quaternary structure, F-type ATPases have 2 components, CF(1) - the catalytic core - and CF(0) - the membrane proton channel. CF(1) has five subunits: alpha(3), beta(3), gamma(1), delta(1), epsilon(1). CF(0) has three main subunits: a, b and c.

It localises to the cell inner membrane. Produces ATP from ADP in the presence of a proton gradient across the membrane. The gamma chain is believed to be important in regulating ATPase activity and the flow of protons through the CF(0) complex. The sequence is that of ATP synthase gamma chain from Helicobacter pylori (strain HPAG1).